Reading from the N-terminus, the 284-residue chain is Nucleotide-binding protein Shal_3708 (284 aa).

8–15 is a binding site for ATP; the sequence is GRSGSGKS. 56 to 59 is a binding site for GTP; sequence DIRN.

It belongs to the RapZ-like family.

In terms of biological role, displays ATPase and GTPase activities. The sequence is that of Nucleotide-binding protein Shal_3708 from Shewanella halifaxensis (strain HAW-EB4).